The chain runs to 700 residues: Pentatricopeptide repeat-containing protein 1, mitochondrial (700 aa).

A disordered region spans residues 49-93; the sequence is SSSQLPLGQERQENTGSLGSDPSHSNSTATQEEDEEEEESFGTLS. Positions 62–78 are enriched in polar residues; sequence NTGSLGSDPSHSNSTAT. Positions 79–88 are enriched in acidic residues; sequence QEEDEEEEES. 6 PPR repeats span residues 135–171, 172–206, 207–245, 246–280, 281–317, and 318–354; these read TPYW…RLQP, MESN…DLEP, SDAT…NFEL, NLKT…GHVV, TEET…GLQP, and SRDS…ATVL. A disordered region spans residues 393 to 414; sequence SQALGPPEPPEARVPGKAQPEV. 3 PPR repeats span residues 519–553, 554–585, and 586–620; these read DLTF…GLVP, NLQT…QVTP, and NTHI…RVPV. A disordered region spans residues 672 to 700; sequence HPWQKFRTKPQGDQDTGKEADDGCALGGR. The segment covering 681–692 has biased composition (basic and acidic residues); sequence PQGDQDTGKEAD.

The protein belongs to the PTCD1 family. As to quaternary structure, associates with mitochondrial leucine tRNAs. Interacts with ELAC2. Abundant in testes, skeletal muscle and heart.

It is found in the mitochondrion. The protein resides in the mitochondrion matrix. Functionally, mitochondrial protein implicated in negative regulation of leucine tRNA levels, as well as negative regulation of mitochondria-encoded proteins and COX activity. Also affects the 3'-processing of mitochondrial tRNAs. This Homo sapiens (Human) protein is Pentatricopeptide repeat-containing protein 1, mitochondrial (PTCD1).